Consider the following 272-residue polypeptide: Phytolongin Phyl2.2 (272 aa).

In terms of domain architecture, Longin spans Cys12–Gln116. The helical; Anchor for type IV membrane protein transmembrane segment at Trp243–Ile263 threads the bilayer.

It belongs to the synaptobrevin family.

The protein localises to the membrane. In terms of biological role, non-SNARE longin protein involved in membrane-trafficking machinery. The polypeptide is Phytolongin Phyl2.2 (Arabidopsis thaliana (Mouse-ear cress)).